A 65-amino-acid polypeptide reads, in one-letter code: Small, acid-soluble spore protein H 1 (65 aa).

Belongs to the SspH family.

It is found in the spore core. The polypeptide is Small, acid-soluble spore protein H 1 (Clostridium botulinum (strain Langeland / NCTC 10281 / Type F)).